An 805-amino-acid chain; its full sequence is Leucine--tRNA ligase (805 aa).

The 'HIGH' region signature appears at 41-52 (PYPSGAGLHVGH). The 'KMSKS' region motif lies at 577-581 (KMSKS). An ATP-binding site is contributed by K580.

Belongs to the class-I aminoacyl-tRNA synthetase family.

It localises to the cytoplasm. It catalyses the reaction tRNA(Leu) + L-leucine + ATP = L-leucyl-tRNA(Leu) + AMP + diphosphate. This is Leucine--tRNA ligase from Staphylococcus aureus (strain JH1).